The following is a 466-amino-acid chain: 3-isopropylmalate dehydratase large subunit (466 aa).

Positions 349, 410, and 413 each coordinate [4Fe-4S] cluster.

This sequence belongs to the aconitase/IPM isomerase family. LeuC type 1 subfamily. Heterodimer of LeuC and LeuD. [4Fe-4S] cluster serves as cofactor.

It carries out the reaction (2R,3S)-3-isopropylmalate = (2S)-2-isopropylmalate. The protein operates within amino-acid biosynthesis; L-leucine biosynthesis; L-leucine from 3-methyl-2-oxobutanoate: step 2/4. Functionally, catalyzes the isomerization between 2-isopropylmalate and 3-isopropylmalate, via the formation of 2-isopropylmaleate. This chain is 3-isopropylmalate dehydratase large subunit, found in Ruthia magnifica subsp. Calyptogena magnifica.